The following is a 122-amino-acid chain: Large ribosomal subunit protein bL12 (122 aa).

The protein belongs to the bacterial ribosomal protein bL12 family. As to quaternary structure, homodimer. Part of the ribosomal stalk of the 50S ribosomal subunit. Forms a multimeric L10(L12)X complex, where L10 forms an elongated spine to which 2 to 4 L12 dimers bind in a sequential fashion. Binds GTP-bound translation factors.

Its function is as follows. Forms part of the ribosomal stalk which helps the ribosome interact with GTP-bound translation factors. Is thus essential for accurate translation. The sequence is that of Large ribosomal subunit protein bL12 from Shewanella woodyi (strain ATCC 51908 / MS32).